Consider the following 367-residue polypeptide: Glutamate 5-kinase (367 aa).

K10 provides a ligand contact to ATP. Substrate contacts are provided by S50, D137, and N149. Residues 169-170 (TD) and 211-217 (TGGMSTK) each bind ATP. The PUA domain maps to 275-353 (AGEITVDEGA…QQIDAILGYE (79 aa)).

Belongs to the glutamate 5-kinase family.

Its subcellular location is the cytoplasm. The catalysed reaction is L-glutamate + ATP = L-glutamyl 5-phosphate + ADP. It participates in amino-acid biosynthesis; L-proline biosynthesis; L-glutamate 5-semialdehyde from L-glutamate: step 1/2. Functionally, catalyzes the transfer of a phosphate group to glutamate to form L-glutamate 5-phosphate. The sequence is that of Glutamate 5-kinase from Salmonella arizonae (strain ATCC BAA-731 / CDC346-86 / RSK2980).